The sequence spans 488 residues: NAD-reducing hydrogenase HoxS subunit beta (488 aa).

Positions 62, 65, 458, and 461 each coordinate Ni(2+).

This sequence belongs to the [NiFe]/[NiFeSe] hydrogenase large subunit family. As to quaternary structure, tetramer of an alpha and a gamma subunits (flavin-containing dimer), and a delta and a nickel-containing beta subunits (hydrogenase dimer). FMN serves as cofactor. It depends on Ni(2+) as a cofactor.

The protein resides in the cytoplasm. It carries out the reaction H2 + NAD(+) = NADH + H(+). The chain is NAD-reducing hydrogenase HoxS subunit beta (hoxH) from Cupriavidus necator (strain ATCC 17699 / DSM 428 / KCTC 22496 / NCIMB 10442 / H16 / Stanier 337) (Ralstonia eutropha).